Here is a 231-residue protein sequence, read N- to C-terminus: 7-cyano-7-deazaguanine synthase (231 aa).

Leu7–Leu17 contributes to the ATP binding site. 4 residues coordinate Zn(2+): Cys195, Cys203, Cys206, and Cys209.

The protein belongs to the QueC family. Zn(2+) is required as a cofactor.

The catalysed reaction is 7-carboxy-7-deazaguanine + NH4(+) + ATP = 7-cyano-7-deazaguanine + ADP + phosphate + H2O + H(+). It participates in purine metabolism; 7-cyano-7-deazaguanine biosynthesis. Catalyzes the ATP-dependent conversion of 7-carboxy-7-deazaguanine (CDG) to 7-cyano-7-deazaguanine (preQ(0)). In Methanosarcina mazei (strain ATCC BAA-159 / DSM 3647 / Goe1 / Go1 / JCM 11833 / OCM 88) (Methanosarcina frisia), this protein is 7-cyano-7-deazaguanine synthase.